We begin with the raw amino-acid sequence, 118 residues long: Large ribosomal subunit protein uL24 (118 aa).

The protein belongs to the universal ribosomal protein uL24 family. In terms of assembly, part of the 50S ribosomal subunit.

Functionally, one of two assembly initiator proteins, it binds directly to the 5'-end of the 23S rRNA, where it nucleates assembly of the 50S subunit. One of the proteins that surrounds the polypeptide exit tunnel on the outside of the subunit. This Prochlorococcus marinus (strain AS9601) protein is Large ribosomal subunit protein uL24.